Consider the following 836-residue polypeptide: Pentatricopeptide repeat-containing protein At2g39620 (836 aa).

23 PPR repeats span residues 1–35 (MPIN…GLKP), 36–62 (HNQL…VRDP), 63–98 (GVVL…GIDP), 99–133 (DKYS…GLES), 134–164 (DVYI…MHVK), 165–199 (DVVT…CVDI), 200–230 (DHVS…VIKK), 233–263 (IFAF…VWRK), 264–298 (DESS…DVRM), 299–333 (NKVA…GLIG), 334–364 (DVSV…IEDR), 365–399 (DVVS…HIKP), 400–434 (NAVT…DIES), 435–465 (ELET…LPIK), 466–500 (DAVA…GVCP), 501–535 (DSRT…GFDS), 536–566 (ECHV…CGFE), 568–602 (STVS…KFQP), 603–637 (NAVT…GFCS), 638–668 (QTPV…ISNK), 669–703 (YIVS…ELKP), 704–734 (DSVS…MGER), and 740–770 (EVEH…MRVK). The tract at residues 775–836 (VWGALLNSSR…KVPACSWIEV (62 aa)) is type E motif; degenerate.

The protein belongs to the PPR family. PCMP-E subfamily.

This chain is Pentatricopeptide repeat-containing protein At2g39620 (PCMP-E33), found in Arabidopsis thaliana (Mouse-ear cress).